A 227-amino-acid polypeptide reads, in one-letter code: Atypical response regulator protein ChxR (227 aa).

One can recognise a Response regulatory domain in the interval His-6–Leu-108. Positions Pro-117 to Asp-213 form a DNA-binding region, ompR/PhoB-type.

In terms of assembly, homodimer.

Its function is as follows. May be a global positive regulator of transcription. Binds a cis-acting element of its own promoter DNA sequence and is hence probably also involved in its own transcription activation. The recognition sequence is 5'-WHGAWNH-N(3-5)-WHGAWNH-3', where W is A/T, H is C/A/T, N is G/C/A/T and the linker length in the middle is 3 to 5 nucleotides. The protein is Atypical response regulator protein ChxR of Chlamydia trachomatis serovar L2 (strain ATCC VR-902B / DSM 19102 / 434/Bu).